Consider the following 360-residue polypeptide: Phospho-N-acetylmuramoyl-pentapeptide-transferase (360 aa).

Helical transmembrane passes span 27–47 (VMAV…LIRF), 71–91 (TPTM…LLWA), 98–118 (VWIV…DDYL), 142–162 (LVLA…TFVM), 168–188 (YMPY…VGSS), 199–219 (GLAI…AYLT), 236–256 (ASEL…FLWF), 263–283 (VFMG…IAVL), 288–308 (ILLV…ILQV), and 338–358 (VIVR…VTLK).

Belongs to the glycosyltransferase 4 family. MraY subfamily. It depends on Mg(2+) as a cofactor.

The protein localises to the cell inner membrane. The catalysed reaction is UDP-N-acetyl-alpha-D-muramoyl-L-alanyl-gamma-D-glutamyl-meso-2,6-diaminopimeloyl-D-alanyl-D-alanine + di-trans,octa-cis-undecaprenyl phosphate = di-trans,octa-cis-undecaprenyl diphospho-N-acetyl-alpha-D-muramoyl-L-alanyl-D-glutamyl-meso-2,6-diaminopimeloyl-D-alanyl-D-alanine + UMP. It participates in cell wall biogenesis; peptidoglycan biosynthesis. In terms of biological role, catalyzes the initial step of the lipid cycle reactions in the biosynthesis of the cell wall peptidoglycan: transfers peptidoglycan precursor phospho-MurNAc-pentapeptide from UDP-MurNAc-pentapeptide onto the lipid carrier undecaprenyl phosphate, yielding undecaprenyl-pyrophosphoryl-MurNAc-pentapeptide, known as lipid I. The protein is Phospho-N-acetylmuramoyl-pentapeptide-transferase of Psychromonas ingrahamii (strain DSM 17664 / CCUG 51855 / 37).